The sequence spans 252 residues: ATP synthase subunit a (252 aa).

6 helical membrane passes run 29-49 (FTNSALFMVATVVVAAAFLFL), 87-107 (FFPLVFSLFMFVLVANLLGLF), 117-137 (IIVTFGLAILVIGTVIVYGFM), 146-166 (LFVPKGVPLVMMVLVVPIEVI), 188-208 (ITLKVFSGFVVSLSALGAVGV), and 211-231 (SILPLAMAVALTALELLVAFL).

It belongs to the ATPase A chain family. As to quaternary structure, F-type ATPases have 2 components, CF(1) - the catalytic core - and CF(0) - the membrane proton channel. CF(1) has five subunits: alpha(3), beta(3), gamma(1), delta(1), epsilon(1). CF(0) has three main subunits: a(1), b(2) and c(9-12). The alpha and beta chains form an alternating ring which encloses part of the gamma chain. CF(1) is attached to CF(0) by a central stalk formed by the gamma and epsilon chains, while a peripheral stalk is formed by the delta and b chains.

It is found in the cell inner membrane. In terms of biological role, key component of the proton channel; it plays a direct role in the translocation of protons across the membrane. The protein is ATP synthase subunit a of Mesorhizobium japonicum (strain LMG 29417 / CECT 9101 / MAFF 303099) (Mesorhizobium loti (strain MAFF 303099)).